The chain runs to 140 residues: Small ribosomal subunit protein uS12 (140 aa).

The interval 1-20 is disordered; sequence MPTINQLVRKGRQSKVVKSD. At Asp102 the chain carries 3-methylthioaspartic acid. A disordered region spans residues 121–140; that stretch reads DGRMQGRSKYGTKRPKAAKK. Positions 130-140 are enriched in basic residues; that stretch reads YGTKRPKAAKK.

This sequence belongs to the universal ribosomal protein uS12 family. Part of the 30S ribosomal subunit. Contacts proteins S8 and S17. May interact with IF1 in the 30S initiation complex.

With S4 and S5 plays an important role in translational accuracy. Functionally, interacts with and stabilizes bases of the 16S rRNA that are involved in tRNA selection in the A site and with the mRNA backbone. Located at the interface of the 30S and 50S subunits, it traverses the body of the 30S subunit contacting proteins on the other side and probably holding the rRNA structure together. The combined cluster of proteins S8, S12 and S17 appears to hold together the shoulder and platform of the 30S subunit. The chain is Small ribosomal subunit protein uS12 from Exiguobacterium sibiricum (strain DSM 17290 / CCUG 55495 / CIP 109462 / JCM 13490 / 255-15).